The chain runs to 382 residues: Nuclear hormone receptor family member nhr-106 (382 aa).

A DNA-binding region (nuclear receptor) is located at residues 2–78 (QTTCEICEVP…MGMMPEKVKV (77 aa)). 2 NR C4-type zinc fingers span residues 5 to 25 (CEICEVPAHGIHFGAITCRGC) and 42 to 61 (CKYSSNCTNFTGKFPQCKSC). Positions 110–380 (DVSNLITRGL…FSNPEMFIDS (271 aa)) constitute an NR LBD domain.

This sequence belongs to the nuclear hormone receptor family.

It is found in the nucleus. In terms of biological role, orphan nuclear receptor. This chain is Nuclear hormone receptor family member nhr-106 (nhr-106), found in Caenorhabditis elegans.